The chain runs to 128 residues: uncharacterized protein (128 aa).

3 consecutive transmembrane segments (helical) span residues 19 to 41 (MAIV…YVGS), 54 to 71 (LTFL…SIMQ), and 75 to 97 (PLIA…VDNL).

It localises to the cell membrane. This is an uncharacterized protein from Pasteurella multocida (strain Pm70).